Consider the following 93-residue polypeptide: Small ribosomal subunit protein uS19 (93 aa).

The protein belongs to the universal ribosomal protein uS19 family.

Functionally, protein S19 forms a complex with S13 that binds strongly to the 16S ribosomal RNA. The sequence is that of Small ribosomal subunit protein uS19 from Karelsulcia muelleri (strain GWSS) (Sulcia muelleri).